The sequence spans 941 residues: MAGAAAAVAAGAAAGAAAAAVSVAAPGRASAPPPPPPVYCVCRQPYDVNRFMIECDICKDWFHGSCVGVEEHHAVDIDLYHCPNCAVLHGSSLMKKRRNWHRHDYTEIDDGSKPVQAGTRTFIKELRSRVFPSADEIIIKMHGSQLTQRYLEKHGFDVPIMVPKLDDLGLRLPSPTFSVMDVERYVGGDKVIDVIDVARQADSKMTLHNYVKYFMNPNRPKVLNVISLEFSDTKMSELVEVPDIAKKLSWVENYWPDDSVFPKPFVQKYCLMGVQDSYTDFHIDFGGTSVWYHVLWGEKIFYLIKPTDENLARYESWSSSVTQSEVFFGDKVDKCYKCVVKQGHTLFVPTGWIHAVLTSQDCMAFGGNFLHNLNIGMQLRCYEMEKRLKTPDLFKFPFFEAICWFVAKNLLETLKELREDGFQPQTYLVQGVKALHTALKLWMKKELVSEHAFEIPDNVRPGHLIKELSKVIRAIEEENGKPVKSQGIPIVCPVSRSSNEATSPYHSRRKMRKLRDHNVRTPSNLDILELHTREVLKRLEMCPWEEDILSSKLNGKFNKHLQPSSTVPEWRAKDNDLRLLLTNGRIIKDERQPFADQSLYTADSENEEDKRRTKKAKMKIEESSGVEGVEHEESQKPLNGFFTRVKSELRSRSSGYSDISESEDSGPECTALKSIFTTEESESSGDEKKQEITSNFKEESNVMRNFLQKSQKPSRSEIPIKRECPTSTSTEEEAIQGMLSMAGLHYSTCLQRQIQSTDCSGERNSLQDPSSCHGSNHEVRQLYRYDKPVECGYHVKTEDPDLRTSSWIKQFDTSRFHPQDLSRSQKCIRKEGSSEISQRVQSRNYVDSSGSSLQNGKYMQNSNLTSGACQISNGSLSPERPVGETSFSVPLHPTKRPASNPPPISNQATKGKRPKKGMATAKQRLGKILKLNRNGHARFFV.

Residues 37 to 88 form a PHD-type zinc finger; the sequence is PVYCVCRQPYDVNRFMIECDICKDWFHGSCVGVEEHHAVDIDLYHCPNCAVL. Residues 97 to 114 are linker; it reads RRNWHRHDYTEIDDGSKP. Positions 230-386 constitute a JmjC domain; sequence FSDTKMSELV…MQLRCYEMEK (157 aa). Thr-279 is a binding site for substrate. Fe cation-binding residues include His-282 and Asp-284. Residue Lys-299 coordinates substrate. A Fe cation-binding site is contributed by His-354. Disordered regions lie at residues 597 to 633, 677 to 700, and 819 to 921; these read QSLY…EHEE, TTEE…KEES, and QDLS…MATA. Ser-604 carries the post-translational modification Phosphoserine. 2 stretches are compositionally biased toward basic and acidic residues: residues 618–633 and 685–700; these read MKIE…EHEE and GDEK…KEES. Over residues 834–876 the composition is skewed to polar residues; sequence SEISQRVQSRNYVDSSGSSLQNGKYMQNSNLTSGACQISNGSL.

It belongs to the JHDM1 histone demethylase family. JHDM1D subfamily. It depends on Fe(2+) as a cofactor.

Its subcellular location is the nucleus. The catalysed reaction is N(6),N(6)-dimethyl-L-lysyl(9)-[histone H3] + 2 2-oxoglutarate + 2 O2 = L-lysyl(9)-[histone H3] + 2 formaldehyde + 2 succinate + 2 CO2. It carries out the reaction N(6),N(6)-dimethyl-L-lysyl(27)-[histone H3] + 2 2-oxoglutarate + 2 O2 = L-lysyl(27)-[histone H3] + 2 formaldehyde + 2 succinate + 2 CO2. It catalyses the reaction N(6),N(6)-dimethyl-L-lysyl(36)-[histone H3] + 2-oxoglutarate + O2 = N(6)-methyl-L-lysyl(36)-[histone H3] + formaldehyde + succinate + CO2. The enzyme catalyses N(6)-methyl-L-lysyl(20)-[histone H4] + 2-oxoglutarate + O2 = L-lysyl(20)-[histone H4] + formaldehyde + succinate + CO2. Histone demethylase required for brain development. Specifically demethylates dimethylated 'Lys-9', 'Lys-27' and 'Lys-36' (H3K9me2, H3K27me2, H3K36me2, respectively) of histone H3 and monomethylated histone H4 'Lys-20' residue (H4K20Me1), thereby playing a central role in histone code. Specifically binds trimethylated 'Lys-4' of histone H3 (H3K4me3), affecting histone demethylase specificity: in presence of H3K4me3, it has no demethylase activity toward H3K9me2, while it has high activity toward H3K27me2. Demethylates H3K9me2 in absence of H3K4me3. Has activity toward H4K20Me1 only when nucleosome is used as a substrate and when not histone octamer is used as substrate. The protein is Lysine-specific demethylase 7A (KDM7A) of Homo sapiens (Human).